The following is a 1227-amino-acid chain: ATP-dependent helicase/nuclease subunit A (1227 aa).

Residues 37-503 (QKRTAEQIEA…ILLKENFRSQ (467 aa)) enclose the UvrD-like helicase ATP-binding domain. 58–65 (ASAGSGKT) lines the ATP pocket. Residues 532–816 (SLVAGSPGQK…QLMTIHKSKG (285 aa)) enclose the UvrD-like helicase C-terminal domain.

Belongs to the helicase family. AddA subfamily. As to quaternary structure, heterodimer of AddA and AddB/RexB. Requires Mg(2+) as cofactor.

It carries out the reaction Couples ATP hydrolysis with the unwinding of duplex DNA by translocating in the 3'-5' direction.. The catalysed reaction is ATP + H2O = ADP + phosphate + H(+). In terms of biological role, the heterodimer acts as both an ATP-dependent DNA helicase and an ATP-dependent, dual-direction single-stranded exonuclease. Recognizes the chi site generating a DNA molecule suitable for the initiation of homologous recombination. The AddA nuclease domain is required for chi fragment generation; this subunit has the helicase and 3' -&gt; 5' nuclease activities. The polypeptide is ATP-dependent helicase/nuclease subunit A (Streptococcus suis (strain 98HAH33)).